A 285-amino-acid chain; its full sequence is NADH-cytochrome b5 reductase 1 (285 aa).

Residues L7–S23 traverse the membrane as a helical segment. Residues T40–V144 enclose the FAD-binding FR-type domain. Residues G124–G139 and H150–L182 contribute to the FAD site.

It belongs to the flavoprotein pyridine nucleotide cytochrome reductase family. In terms of assembly, monomer. Component of the 2-(3-amino-3-carboxypropyl)histidine synthase complex composed of DPH1, DPH2, DPH3 and a NADH-dependent reductase, predominantly CBR1. Requires FAD as cofactor.

The protein localises to the mitochondrion outer membrane. The enzyme catalyses 2 Fe(III)-[cytochrome b5] + NADH = 2 Fe(II)-[cytochrome b5] + NAD(+) + H(+). It carries out the reaction 2 Fe(3+)-[Dph3] + NADH = 2 Fe(2+)-[Dph3] + NAD(+) + H(+). The protein operates within protein modification; peptidyl-diphthamide biosynthesis. Functionally, NADH-dependent reductase for DPH3 and cytochrome b5. Required for the first step of diphthamide biosynthesis, a post-translational modification of histidine which occurs in elongation factor 2. DPH1 and DPH2 transfer a 3-amino-3-carboxypropyl (ACP) group from S-adenosyl-L-methionine (SAM) to a histidine residue, the reaction is assisted by a reduction system comprising DPH3 and a NADH-dependent reductase, predominantly CBR1. By reducing DPH3, also involved in the formation of the tRNA wobble base modification mcm5s 2U (5-methoxycarbonylmethyl-2-thiouridine), mediated by the elongator complex. The cytochrome b5/NADH cytochrome b5 reductase electron transfer system supports the catalytic activity of several sterol biosynthetic enzymes. This is NADH-cytochrome b5 reductase 1 (CBR1) from Candida glabrata (strain ATCC 2001 / BCRC 20586 / JCM 3761 / NBRC 0622 / NRRL Y-65 / CBS 138) (Yeast).